The chain runs to 74 residues: Conotoxin AbVIL (74 aa).

Positions 1–17 (VLIIAVLFLTACQLTTA) are cleaved as a signal peptide. The disordered stretch occupies residues 17 to 41 (AETSSRGEQKHRAPRSTDKNSRMTK). Residues 18–40 (ETSSRGEQKHRAPRSTDKNSRMT) constitute a propeptide that is removed on maturation. Residues 21–37 (SRGEQKHRAPRSTDKNS) are compositionally biased toward basic and acidic residues. Intrachain disulfides connect cysteine 43–cysteine 57, cysteine 50–cysteine 61, and cysteine 56–cysteine 68.

The protein belongs to the conotoxin O1 superfamily. In terms of tissue distribution, expressed by the venom duct.

The protein resides in the secreted. This is Conotoxin AbVIL from Conus abbreviatus (Abbreviated cone).